The following is a 509-amino-acid chain: Flotillin-like protein FloT (509 aa).

Residues 1 to 3 (MTM) lie on the Cytoplasmic side of the membrane. Residues 4 to 24 (PIIMIIGVVFFLLIALIAVFI) lie within the membrane without spanning it. The Cytoplasmic portion of the chain corresponds to 25 to 509 (TKYRTAGPDE…KEAKTIQKSE (485 aa)). The interval 119–301 (AAEQFLGKSK…KIIERQKQIE (183 aa)) is PHB domain. The interval 203-509 (RIAQVKRDAD…KEAKTIQKSE (307 aa)) is required for correct localization. 4 consecutive short sequence motifs (EA repeat) follow at residues 342-344 (AEA), 357-360 (AEAE), 370-373 (AEAE), and 390-394 (AEAEA). Residues 485–509 (KGNVKQSINELTNEIKEAKTIQKSE) are not required for correct localization.

The protein belongs to the band 7/mec-2 family. Flotillin subfamily. In terms of assembly, homooligomerizes. Oligomerizes in very large complexes in vitro. Interacts with FloA, FtsH, FtsX, OppA, SdhA and SecY in detergent-resistant membrane (DRM) fractions. Interacts with FtsH at midcell. Interacts with FloA. Interacts in vivo with KinC, FloA, FtsH and ResE. Interacts with ResE, colocalizes with ResE in FloT-only membrane rafts. Another study shows nearly complete colocalization with NfeD2, but only minor colocalization with FtsH or KinC.

It is found in the cell membrane. The protein localises to the membrane raft. Functionally, found in functional membrane microdomains (FMM) that may be equivalent to eukaryotic membrane rafts. FMMs are highly dynamic and increase in number as cells age. FloA and FloT function is partially redundant; double deletions have marked synthetic phenotypes. Flotillins are thought to be important factors in membrane fluidity, especially during periods of rapid growth in rich media. Whether specific proteins are associated with FMMs is controversial; in one study FloT rafts have been shown to include proteins involved in adaptation to stationary phase, while FloA-FloT rafts include proteins involved in differentiation including sporulation, biofilm formation and DNA uptake competence. Another (more finely resolved) study only showed association of NfeD2 with FloT rafts of all the proteins examined. Aids homooligomerization of KinC and KinD but not KinB, may prevent incorrect hetero-association of the above kinases. Simultaneous overexpression of both FloA and FloT leads to defects in cell division and differentiation, in part caused by stabilization of FtsH and its subsequent increased ability to degrade proteins. Cells make more biofilm, are about half as long, have less EzrA and more frequent Z-rings. Involved in spatial organization of membranes, perhaps recruiting proteins (e.g. NfeD2) to specific membrane regions. Plays a role in phosphorylation of master regulator Spo0A, an early sporulation event. Plays a non-redundant role with dynamin-like protein A (dynA) in membrane dynamics and cell shape. The polypeptide is Flotillin-like protein FloT (Bacillus subtilis (strain 168)).